Reading from the N-terminus, the 265-residue chain is Zearalenone hydrolase (265 aa).

Zearalenone is bound by residues Gly-35, Ser-105, and Ser-106. Residue Ser-105 is part of the active site. Glu-129 is an active-site residue. Zearalenone contacts are provided by Trp-185, Tyr-189, and His-243. Residue His-243 is part of the active site.

This sequence belongs to the AB hydrolase superfamily. Hydrolase RutD family. Homodimer.

The catalysed reaction is zearalenone + H2O = hydrolyzed zearalenone + H(+). In terms of biological role, lactonohydrolase that specifically hydrolyzes zearalenone (ZEN), an oestrogenic mycotoxin produced by numerous Fusarium specie, into a non-toxic alkylresorcinol product. In Cladophialophora bantiana (strain ATCC 10958 / CDC1940 / 8579 / CBS 173.52) (Xylohypha bantiana), this protein is Zearalenone hydrolase.